Here is a 78-residue protein sequence, read N- to C-terminus: Large ribosomal subunit protein bL28 (78 aa).

This sequence belongs to the bacterial ribosomal protein bL28 family.

This Francisella philomiragia subsp. philomiragia (strain ATCC 25017 / CCUG 19701 / FSC 153 / O#319-036) protein is Large ribosomal subunit protein bL28.